Consider the following 1274-residue polypeptide: DENN domain-containing protein 3 (1274 aa).

A disordered region spans residues Gly-65–Asp-108. Residues Gly-75–Leu-245 form the uDENN domain. Positions Lys-76–Lys-88 are enriched in basic residues. Residues Pro-89–Asp-105 are compositionally biased toward basic and acidic residues. Positions Ile-268–Gln-400 constitute a cDENN domain. In terms of domain architecture, dDENN spans Val-402–Ala-506. Residues Arg-520–Glu-970 form a linker region. Phosphoserine; by ULK1 is present on residues Ser-554 and Ser-572. At Tyr-940 the chain carries Phosphotyrosine. WD repeat units lie at residues Ala-975–Ala-1013, His-1019–Val-1055, Ser-1059–Val-1099, Arg-1103–Gly-1140, Leu-1146–Leu-1181, Gln-1186–Met-1228, and Thr-1234–Val-1273.

As to quaternary structure, forms oligomers. Interacts with 6 of the 7 known isoforms of 14-3-3 proteins.

Its subcellular location is the cytoplasm. In terms of biological role, guanine nucleotide exchange factor (GEF) activating Rab12. Promotes the exchange of GDP to GTP, converting inactive GDP-bound Rab12 into its active GTP-bound form. Regulates autophagy in response to starvation through Rab12 activation. Starvation leads to ULK1/2-dependent phosphorylation of Ser-554 and Ser-572, which in turn allows recruitment of 14-3-3 adapter proteins and leads to up-regulation of GEF activity towards Rab12. Also plays a role in protein transport from recycling endosomes to lysosomes, regulating, for instance, the degradation of the transferrin receptor and of the amino acid transporter PAT4. Starvation also induces phosphorylation at Tyr-940, which leads to up-regulated GEF activity and initiates autophagy. The protein is DENN domain-containing protein 3 (Dennd3) of Mus musculus (Mouse).